Here is a 506-residue protein sequence, read N- to C-terminus: Anaerobic nitric oxide reductase transcription regulator NorR (506 aa).

Asp-57 is subject to 4-aspartylphosphate. The Sigma-54 factor interaction domain occupies Met-187–Val-416. ATP-binding positions include Gly-215 to Glu-222 and Ala-278 to Glu-287. The H-T-H motif DNA-binding region spans Trp-481–Lys-500.

The protein operates within nitrogen metabolism; nitric oxide reduction. In terms of biological role, required for the expression of anaerobic nitric oxide (NO) reductase, acts as a transcriptional activator for at least the norVW operon. Activation also requires sigma-54. This is Anaerobic nitric oxide reductase transcription regulator NorR from Citrobacter koseri (strain ATCC BAA-895 / CDC 4225-83 / SGSC4696).